The chain runs to 466 residues: Xanthine permease XanQ (466 aa).

At 1 to 44 the chain is on the cytoplasmic side; it reads MSDINHAGSDLIFELEDRPPFHQALVGAITHLLAIFVPMVTPAL. Residues 45 to 65 form a helical membrane-spanning segment; sequence IVGAALQLSAETTAYLVSMAM. Over 66 to 74 the chain is Periplasmic; the sequence is IASGIGTWL. A helical membrane pass occupies residues 75 to 95; it reads QVNRYGIVGSGLLSIQSVNFS. Residues 96 to 99 lie on the Cytoplasmic side of the membrane; that stretch reads FVTV. Residues 100 to 120 form a helical membrane-spanning segment; sequence MIALGSSMKSDGFHEELIMSS. The Periplasmic segment spans residues 121-139; that stretch reads LLGVSFVGAFLVVGSSFIL. Residues 140–160 traverse the membrane as a helical segment; it reads PYLRRVITPTVSGIVVLMIGL. The Cytoplasmic portion of the chain corresponds to 161 to 170; the sequence is SLIKVGIIDF. The chain crosses the membrane as a helical span at residues 171–191; that stretch reads GGGFAAKSSGTFGNYEHLGVG. Residues 192–199 lie on the Periplasmic side of the membrane; sequence LLVLIVVI. Residues 200–220 form a helical membrane-spanning segment; that stretch reads GFNCCRSPLLRMGGIAIGLCV. Topologically, residues 221–229 are cytoplasmic; it reads GYIASLCLG. The chain crosses the membrane as a helical span at residues 230 to 250; it reads MVDFSSMRNLPLITIPHPFKY. The Periplasmic segment spans residues 251–277; it reads GFSFSFHQFLVVGTIYLLSVLEAVGDI. A helical membrane pass occupies residues 278-298; the sequence is TATAMVSRRPIQGEEYQSRLK. The Cytoplasmic segment spans residues 299–317; that stretch reads GGVLADGLVSVIASAVGSL. Residues 318-338 traverse the membrane as a helical segment; the sequence is PLTTFAQNNGVIQMTGVASRY. Over 339–361 the chain is Periplasmic; the sequence is VGRTIAVMLVILGLFPMIGGFFT. A helical membrane pass occupies residues 362–382; it reads TIPSAVLGGAMTLMFSMIAIA. A topological domain (cytoplasmic) is located at residue Gly-383. Residues 384 to 403 form a helical membrane-spanning segment; it reads IRIIITNGLKRRETLIVATS. The Periplasmic portion of the chain corresponds to 404-444; it reads LGLGLGVSYDPEIFKILPASIYVLVENPICAGGLTAILLNI. A helical transmembrane segment spans residues 445-465; it reads ILPGGYRQENVLPGITSAEEM. Residue Asp-466 is a topological domain, cytoplasmic.

It belongs to the nucleobase:cation symporter-2 (NCS2) (TC 2.A.40) family.

The protein resides in the cell inner membrane. The enzyme catalyses xanthine(in) + H(+)(in) = xanthine(out) + H(+)(out). Specific, proton motive force-dependent high-affinity transporter for xanthine. The sequence is that of Xanthine permease XanQ (xanQ) from Escherichia coli O157:H7.